We begin with the raw amino-acid sequence, 264 residues long: ECF RNA polymerase sigma factor BldN (264 aa).

Residues 1–87 (MYPHVGVDAS…PAADSDSARM (87 aa)) form a not required for transcription in vitro region. The segment at 64 to 83 (RSSSSGAAATTHRRPAADSD) is disordered. The sigma-70 factor domain-2 stretch occupies residues 105–172 (LYDQYSDTVY…LVADHFKSSR (68 aa)). The Polymerase core binding motif lies at 129–132 (DLTS). The tract at residues 204-255 (ALLDAVRRLNPQQQECVTLRFLQGLSVAETARVMGKNEGAIKTLQYRAVRTL) is sigma-70 factor domain-4.

Belongs to the sigma-70 factor family. ECF subfamily. Post-translationally, two forms of protein exist; a 35 kDa form in early growth and a 28 kDa form seen in later stages (at protein level). In liquid culture the larger form accumulates to higher level than on solid media. The shorter form results from processing just upstream of Met-87; the exact position is unknown. There are 4 possible start codons; mutation of the first prevents protein production while mutation of the other 3 (Val-44, Met-87 and Met-88) permits production of both forms. Introduction of stop codons between the first and second, or second and third possible start codons also prevents protein production, corroborating that the annotated start codon is the correct one.

Sigma factors are initiation factors that promote the attachment of RNA polymerase to specific initiation sites and are then released. Extracytoplasmic function (ECF) sigma factors are usually held in an inactive form by an anti-sigma factor until released. ECF sigma factor involved in aerial mycelium formation, required for translation from the bldMp1 promoter. Expressed as a preprotein; processing and accumulation of the mature protein starts as aerial mycelium formation and sporulation commence. Activates expression of about 17 genes, including those for rdlA and most of the chaplins (chpA to chpH); chaplin activation is indirect. This chain is ECF RNA polymerase sigma factor BldN, found in Streptomyces coelicolor (strain ATCC BAA-471 / A3(2) / M145).